The sequence spans 148 residues: EKC/KEOPS complex subunit Lage3 (148 aa).

A disordered region spans residues 1 to 21 (MQTAHTGLSHTADGADGQTSR).

The protein belongs to the CTAG/PCC1 family. In terms of assembly, component of the EKC/KEOPS complex composed of at least GON7, TP53RK, TPRKB, OSGEP and LAGE3; the whole complex dimerizes.

It localises to the cytoplasm. The protein localises to the nucleus. Component of the EKC/KEOPS complex that is required for the formation of a threonylcarbamoyl group on adenosine at position 37 (t(6)A37) in tRNAs that read codons beginning with adenine. The complex is probably involved in the transfer of the threonylcarbamoyl moiety of threonylcarbamoyl-AMP (TC-AMP) to the N6 group of A37. LAGE3 functions as a dimerization module for the complex. This chain is EKC/KEOPS complex subunit Lage3, found in Mus musculus (Mouse).